A 3013-amino-acid chain; its full sequence is DmX-like protein 1 (3013 aa).

3 WD repeats span residues 108–145 (FLDS…TEDE), 164–204 (KTAS…RPAV), and 227–275 (AHPR…NDCF). Phosphoserine occurs at positions 322, 420, 423, and 434. A disordered region spans residues 418-442 (PSSEASVEDSIQADLKSDEELDDGV). Residues 474-514 (DHQIEVLLSEWSKNADMLFSIHPMDGSLLVWHVDWLDEYQP) form a WD 4 repeat. Serine 572 carries the phosphoserine modification. WD repeat units follow at residues 578–619 (AHSK…ESAF) and 842–893 (KKRL…TPVS). Serine 916 and serine 922 each carry phosphoserine. WD repeat units lie at residues 970–1008 (HLSS…GESA), 1145–1193 (EDGS…PLSK), and 1208–1248 (GAPP…EPVI). Serine 1829, serine 1896, serine 1903, and serine 1965 each carry phosphoserine. Disordered stretches follow at residues 2364 to 2406 (GQAN…PPAV) and 2431 to 2462 (QSRA…GLQL). The segment covering 2385–2398 (SKVSARESPVSSSS) has biased composition (low complexity). Over residues 2437–2455 (DSEESLESDDEEEEDDDDA) the composition is skewed to acidic residues. WD repeat units lie at residues 2728-2769 (KAIN…TCFR), 2771-2810 (GGNS…CPVT), 2822-2864 (CHNK…ANSL), 2870-2909 (CHDS…QRQL), 2912-2951 (SHDS…LLHT), and 2964-3002 (NIGT…SPLN).

In Mus musculus (Mouse), this protein is DmX-like protein 1 (Dmxl1).